Consider the following 500-residue polypeptide: MEVSTNPSSNIDPGDYVEMNDSITHLPSKVVIQDITMELHCPLCNDWFRDPLMLSCGHNFCEACIQDFWRLQAKETFCPECKMLCQYNNCTFNPVLDKLVEKIKKLPLLKGHPQCPEHGENLKLFSKPDGKLICFQCKDARLSVGQSKEFLQISDAVHFFTEELAIQQGQLETTLKELQTLRNMQKEAIAAHKENKLHLQQHVSMEFLKLHQFLHSKEKDILTELREEGKALNEEMELNLSQLQEQCLLAKDMLVSIQAKTEQQNSFDFLKDITTLLHSLEQGMKVLATRELISRKLNLGQYKGPIQYMVWREMQDTLCPGLSPLTLDPKTAHPNLVLSKSQTSVWHGDIKKIMPDDPERFDSSVAVLGSRGFTSGKWYWEVEVAKKTKWTVGVVRESIIRKGSCPLTPEQGFWLLRLRNQTDLKALDLPSFSLTLTNNLDKVGIYLDYEGGQLSFYNAKTMTHIYTFSNTFMEKLYPYFCPCLNDGGENKEPLHILHPQ.

Residues 1–152 (MEVSTNPSSN…SVGQSKEFLQ (152 aa)) are necessary for nuclear localization. The RING-type zinc-finger motif lies at 41–82 (CPLCNDWFRDPLMLSCGHNFCEACIQDFWRLQAKETFCPECK). Residues 161–255 (TEELAIQQGQ…QCLLAKDMLV (95 aa)) are a coiled coil. Residues 305–500 (PIQYMVWREM…KEPLHILHPQ (196 aa)) enclose the B30.2/SPRY domain. Phosphoserine is present on S341.

It belongs to the TRIM/RBCC family. In terms of assembly, homo-multimer; required for antiviral activity. Interacts with PML. In terms of processing, phosphorylated. Phosphorylation is necessary for nuclear localization.

Its subcellular location is the cytoplasm. It is found in the nucleus. The protein localises to the nucleus speckle. It localises to the cytoskeleton. The protein resides in the microtubule organizing center. Its subcellular location is the centrosome. It carries out the reaction S-ubiquitinyl-[E2 ubiquitin-conjugating enzyme]-L-cysteine + [acceptor protein]-L-lysine = [E2 ubiquitin-conjugating enzyme]-L-cysteine + N(6)-ubiquitinyl-[acceptor protein]-L-lysine.. Its pathway is protein modification; protein ubiquitination. E3 ubiquitin ligase that plays an important role in antiviral immunity by restricting different viral infections including dengue virus or vesicular stomatitis indiana virus. Ubiquitinates viral proteins such as dengue virus NS3 thereby limiting infection. In addition, acts as a key mediator of type I interferon induced microtubule stabilization by directly associating to microtubules independently of its E3 ligase activity. Also plays a role in cataract formation together with TP53. Mechanistically, inhibits UVB-induced cell apoptosis and reactive oxygen species (ROS) production by inducing TP53 ubiquitination. Regulates centrosome dynamics and mitotic progression by ubiquitinating STK3/MST2; leading to its redistribution to the perinuclear cytoskeleton and subsequent phosphorylation by PLK1. This Homo sapiens (Human) protein is E3 ubiquitin-protein ligase TRIM69 (TRIM69).